The sequence spans 376 residues: CYP enzymes assisting alcohol dehydrogenase (376 aa).

Residues cysteine 43, threonine 45, histidine 64, cysteine 94, cysteine 97, cysteine 100, cysteine 108, and cysteine 173 each coordinate Zn(2+). Threonine 45 contributes to the NAD(+) binding site. Residues threonine 45 and histidine 64 each coordinate substrate. NAD(+) is bound by residues 199–204 (GLGAVG), aspartate 223, lysine 228, 294–296 (LGA), phenylalanine 320, and lysine 371.

It belongs to the zinc-containing alcohol dehydrogenase family. Class-III subfamily. As to quaternary structure, homodimer. Zn(2+) serves as cofactor.

Its pathway is alkaloid biosynthesis. Functionally, may be a positive catalyzer of strictosidine production by assisting secologanin biosynthesis, thus being involved in monoterpene indole alkaloids accumulation. In Catharanthus roseus (Madagascar periwinkle), this protein is CYP enzymes assisting alcohol dehydrogenase.